The primary structure comprises 432 residues: Nuclear pore complex-interacting protein family member B9 (432 aa).

Disordered stretches follow at residues 260–280 and 353–420; these read RMGR…NSLS and SPLP…LRTR. The span at 270–280 shows a compositional bias: polar residues; the sequence is QQHSITDNSLS. Residues 374–402 are compositionally biased toward basic and acidic residues; that stretch reads EVEKPPKPKRWRVDEVEQSPKPKRQREAE. Positions 408-420 are enriched in basic residues; sequence KPKRRRLSKLRTR.

Belongs to the NPIP family.

This chain is Nuclear pore complex-interacting protein family member B9 (NPIPB9), found in Homo sapiens (Human).